Consider the following 581-residue polypeptide: Transcription activator GAGA (581 aa).

Residues 34 to 99 (VDCTLAAGGR…VYRGEVSVDH (66 aa)) form the BTB domain. The segment at 201–397 (VIQAFLPARK…SSGSGSGALS (197 aa)) is interaction with E(bx). Residue T237 is modified to Phosphothreonine. Disordered stretches follow at residues 298–343 (ITPA…EQPA) and 364–404 (LRHF…SVPQ). The C2H2-type; degenerate zinc-finger motif lies at 343–366 (ATCPICYAVIRQSRNLRRHLELRH). Positions 381 to 401 (GKKSSSGSSGSGSGALSSSGS) are enriched in low complexity.

As to quaternary structure, interacts with Bin1, lolal, corto, ttk and ph-p. Interacts with FACT subunits Ssrp and dre4/SPT16. Interacts with E(bx). Upon ecdysone stimulation, interacts with Nup98. Post-translationally, the N-terminus is blocked. In terms of tissue distribution, expressed in the central nervous system throughout development.

It is found in the nucleus. The protein localises to the chromosome. Functionally, transcriptional activator that functions by regulating chromatin structure. Overcomes the repressive effects of chromatin by promoting the open chromatin conformation in promoter gene regions, thereby allowing access to other transcription factors. Binds to DNA Polycomb response elements (PREs) at the bithorax complex and to the proximal region of the engrailed promoter, and positively regulates transcription of many genes including homeotic ones. Involved in zygotic genome activation (ZGA), a critical event in early embryonic development during which the developmental control passes from maternally provided mRNAs to the expression of the zygotic genome after fertilization. Binds to the DNA sequence (GA)n, with optimal binding to the pentamer 5'-GAGAG-3'. Binds DNA as an oligomer. May also act as a transcriptional repressor, maintaining the repressed state of genes including lolal, and down-regulating its own transcription. Required for dosage compensation in males and may be involved in oogenesis. Also has a role in nuclear division. The protein is Transcription activator GAGA (Trl) of Drosophila melanogaster (Fruit fly).